A 394-amino-acid polypeptide reads, in one-letter code: 8-amino-7-oxononanoate synthase (394 aa).

R22 serves as a coordination point for substrate. 113-114 (GY) serves as a coordination point for pyridoxal 5'-phosphate. Residue H138 coordinates substrate. 3 residues coordinate pyridoxal 5'-phosphate: S184, H212, and T240. Residue K243 is modified to N6-(pyridoxal phosphate)lysine. A substrate-binding site is contributed by T359.

The protein belongs to the class-II pyridoxal-phosphate-dependent aminotransferase family. BioF subfamily. As to quaternary structure, homodimer. Pyridoxal 5'-phosphate is required as a cofactor.

The enzyme catalyses 6-carboxyhexanoyl-[ACP] + L-alanine + H(+) = (8S)-8-amino-7-oxononanoate + holo-[ACP] + CO2. The protein operates within cofactor biosynthesis; biotin biosynthesis. In terms of biological role, catalyzes the decarboxylative condensation of pimeloyl-[acyl-carrier protein] and L-alanine to produce 8-amino-7-oxononanoate (AON), [acyl-carrier protein], and carbon dioxide. The protein is 8-amino-7-oxononanoate synthase of Janthinobacterium sp. (strain Marseille) (Minibacterium massiliensis).